A 119-amino-acid chain; its full sequence is MAFDPASLTYDARGLVPAIAQDHATGEVLMMAWMNAEAVARTLETGRVTYWSRSRQSFWVKGETSGHIQRLVELRIDCDRDCLLLLIEQVGPACHTHRRSCFYTAVREGAEQVFLDPMG.

Aspartate 77 is a binding site for Mg(2+). Cysteine 78 serves as a coordination point for Zn(2+). Residues aspartate 79 and aspartate 81 each contribute to the Mg(2+) site. 2 residues coordinate Zn(2+): cysteine 94 and cysteine 101.

Belongs to the PRA-CH family. In terms of assembly, homodimer. It depends on Mg(2+) as a cofactor. Zn(2+) is required as a cofactor.

It is found in the cytoplasm. It carries out the reaction 1-(5-phospho-beta-D-ribosyl)-5'-AMP + H2O = 1-(5-phospho-beta-D-ribosyl)-5-[(5-phospho-beta-D-ribosylamino)methylideneamino]imidazole-4-carboxamide. The protein operates within amino-acid biosynthesis; L-histidine biosynthesis; L-histidine from 5-phospho-alpha-D-ribose 1-diphosphate: step 3/9. Functionally, catalyzes the hydrolysis of the adenine ring of phosphoribosyl-AMP. The protein is Phosphoribosyl-AMP cyclohydrolase of Cereibacter sphaeroides (strain ATCC 17025 / ATH 2.4.3) (Rhodobacter sphaeroides).